We begin with the raw amino-acid sequence, 533 residues long: 2,3-bisphosphoglycerate-independent phosphoglycerate mutase (533 aa).

2 residues coordinate Mn(2+): Asp-15 and Ser-65. The Phosphoserine intermediate role is filled by Ser-65. Substrate is bound by residues His-126, Arg-156–Asp-157, Arg-188, Arg-194, Arg-258–Arg-261, and Lys-331. Asp-398, His-402, Asp-439, His-440, and His-457 together coordinate Mn(2+).

The protein belongs to the BPG-independent phosphoglycerate mutase family. Monomer. It depends on Mn(2+) as a cofactor.

It carries out the reaction (2R)-2-phosphoglycerate = (2R)-3-phosphoglycerate. It participates in carbohydrate degradation; glycolysis; pyruvate from D-glyceraldehyde 3-phosphate: step 3/5. Catalyzes the interconversion of 2-phosphoglycerate and 3-phosphoglycerate. The polypeptide is 2,3-bisphosphoglycerate-independent phosphoglycerate mutase (Trichormus variabilis (strain ATCC 29413 / PCC 7937) (Anabaena variabilis)).